Reading from the N-terminus, the 399-residue chain is Carbamoyl phosphate synthase small chain (399 aa).

The tract at residues 1-204 is CPSase; it reads MTKTTLSSDP…WNKGYTINNE (204 aa). Positions 60, 256, and 258 each coordinate L-glutamine. A Glutamine amidotransferase type-1 domain is found at 208-396; that stretch reads HIVAIDYGIK…HDLIVNYREQ (189 aa). Cys285 acts as the Nucleophile in catalysis. The L-glutamine site is built by Leu286, Gln289, Asn327, Gly329, and Phe330. Active-site residues include His369 and Glu371.

It belongs to the CarA family. In terms of assembly, composed of two chains; the small (or glutamine) chain promotes the hydrolysis of glutamine to ammonia, which is used by the large (or ammonia) chain to synthesize carbamoyl phosphate. Tetramer of heterodimers (alpha,beta)4.

It catalyses the reaction hydrogencarbonate + L-glutamine + 2 ATP + H2O = carbamoyl phosphate + L-glutamate + 2 ADP + phosphate + 2 H(+). The enzyme catalyses L-glutamine + H2O = L-glutamate + NH4(+). The protein operates within amino-acid biosynthesis; L-arginine biosynthesis; carbamoyl phosphate from bicarbonate: step 1/1. It participates in pyrimidine metabolism; UMP biosynthesis via de novo pathway; (S)-dihydroorotate from bicarbonate: step 1/3. Functionally, small subunit of the glutamine-dependent carbamoyl phosphate synthetase (CPSase). CPSase catalyzes the formation of carbamoyl phosphate from the ammonia moiety of glutamine, carbonate, and phosphate donated by ATP, constituting the first step of 2 biosynthetic pathways, one leading to arginine and/or urea and the other to pyrimidine nucleotides. The small subunit (glutamine amidotransferase) binds and cleaves glutamine to supply the large subunit with the substrate ammonia. This chain is Carbamoyl phosphate synthase small chain, found in Bartonella bacilliformis (strain ATCC 35685 / KC583 / Herrer 020/F12,63).